Reading from the N-terminus, the 180-residue chain is ATP-dependent protease subunit HslV (180 aa).

Residue Thr8 is part of the active site. 3 residues coordinate Na(+): Gly165, Asp168, and Thr171.

This sequence belongs to the peptidase T1B family. HslV subfamily. In terms of assembly, a double ring-shaped homohexamer of HslV is capped on each side by a ring-shaped HslU homohexamer. The assembly of the HslU/HslV complex is dependent on binding of ATP.

Its subcellular location is the cytoplasm. The catalysed reaction is ATP-dependent cleavage of peptide bonds with broad specificity.. Allosterically activated by HslU binding. In terms of biological role, protease subunit of a proteasome-like degradation complex believed to be a general protein degrading machinery. The sequence is that of ATP-dependent protease subunit HslV from Lactiplantibacillus plantarum (strain ATCC BAA-793 / NCIMB 8826 / WCFS1) (Lactobacillus plantarum).